A 195-amino-acid chain; its full sequence is Molybdenum cofactor guanylyltransferase (195 aa).

Residues 10-12 (LAG), K23, N51, D69, and D99 each bind GTP. Residue D99 coordinates Mg(2+).

The protein belongs to the MobA family. In terms of assembly, monomer. Mg(2+) is required as a cofactor.

The protein localises to the cytoplasm. It carries out the reaction Mo-molybdopterin + GTP + H(+) = Mo-molybdopterin guanine dinucleotide + diphosphate. In terms of biological role, transfers a GMP moiety from GTP to Mo-molybdopterin (Mo-MPT) cofactor (Moco or molybdenum cofactor) to form Mo-molybdopterin guanine dinucleotide (Mo-MGD) cofactor. This Shewanella putrefaciens (strain CN-32 / ATCC BAA-453) protein is Molybdenum cofactor guanylyltransferase.